The sequence spans 159 residues: SsrA-binding protein (159 aa).

Residues 132–159 (KDFDKRHTEKERDSDREIQRAMRHGKDD) are disordered.

This sequence belongs to the SmpB family.

It localises to the cytoplasm. In terms of biological role, required for rescue of stalled ribosomes mediated by trans-translation. Binds to transfer-messenger RNA (tmRNA), required for stable association of tmRNA with ribosomes. tmRNA and SmpB together mimic tRNA shape, replacing the anticodon stem-loop with SmpB. tmRNA is encoded by the ssrA gene; the 2 termini fold to resemble tRNA(Ala) and it encodes a 'tag peptide', a short internal open reading frame. During trans-translation Ala-aminoacylated tmRNA acts like a tRNA, entering the A-site of stalled ribosomes, displacing the stalled mRNA. The ribosome then switches to translate the ORF on the tmRNA; the nascent peptide is terminated with the 'tag peptide' encoded by the tmRNA and targeted for degradation. The ribosome is freed to recommence translation, which seems to be the essential function of trans-translation. In Pseudomonas aeruginosa (strain LESB58), this protein is SsrA-binding protein.